The sequence spans 465 residues: MGMDYTPRQIVEQLDQFIVGQKQAKKSVAVALRNRYRRMKLDEGFRDEIVPKNILMIGPTGVGKTEIARRLAKLVGAPFIKVEATKFTEVGYVGRDVESMVRDLVEMAVRMVKEEKMAGVMNEAEEEANKRLVKLLVPESKKKPAMKNPFEMLFQSDGSDGDDETTEQDSHDEIRSKRKRIAHQLALGELEDHIVSVEIDEVPPSMFDMLQGSGMEQMGMNMQDAFGQFMPKKKKKRNLPVSEARKVLTQQEAQKLVDMDEVAQEATSRAEGSGIIFIDEIDKVAGKQENAANVSREGVQRDILPIVEGSTVVTKHGTVKTDHMLFVAAGAFHMSKPSDLIPELQGRFPIRVELEKLTVEDFKRILTEPSNALIKQYQLMLQTEGINVEFTDEAIERLAEIAYQVNQNTDNIGARRLHTILEKLLEDLSYEAPEITMEKVEITVGYVDDKLSSIVQDKDLSQFIL.

ATP-binding positions include Val19 and 61–66; that span reads GVGKTE. The segment at 153-175 is disordered; sequence LFQSDGSDGDDETTEQDSHDEIR. Residues Asp279, Glu343, and Arg415 each coordinate ATP.

Belongs to the ClpX chaperone family. HslU subfamily. A double ring-shaped homohexamer of HslV is capped on each side by a ring-shaped HslU homohexamer. The assembly of the HslU/HslV complex is dependent on binding of ATP.

It is found in the cytoplasm. ATPase subunit of a proteasome-like degradation complex; this subunit has chaperone activity. The binding of ATP and its subsequent hydrolysis by HslU are essential for unfolding of protein substrates subsequently hydrolyzed by HslV. HslU recognizes the N-terminal part of its protein substrates and unfolds these before they are guided to HslV for hydrolysis. The sequence is that of ATP-dependent protease ATPase subunit HslU from Oceanobacillus iheyensis (strain DSM 14371 / CIP 107618 / JCM 11309 / KCTC 3954 / HTE831).